A 538-amino-acid chain; its full sequence is GSY2-interacting protein PIG2 (538 aa).

A phosphoserine mark is found at S162, S196, S296, and S304. One can recognise a CBM21 domain in the interval 384–508 (LNLSRGRPVF…NNDSANYKID (125 aa)).

Functionally, interacts with glycogen synthase 2 (GSY2); possibly also interacts with phosphatase 1 (GLC7). In Saccharomyces cerevisiae (strain ATCC 204508 / S288c) (Baker's yeast), this protein is GSY2-interacting protein PIG2 (PIG2).